Reading from the N-terminus, the 305-residue chain is MRPLAIIGPTGTGKSALALDVAERLGGEIGVEIVNADAMQLYRGMDIGTAKLPAAQRRGVPHHQLDVLDVTETASVARYQSEAARDIETIAARGAVPIIVGGSMMYVQALLDDWAFPATDPAVRARWEQRLVEVGVATLHGELGKVDPDAAASILPTDGRRIVRALEVVELTGQPFAASAPTIGAPRWDTAIIGLDWETSVLDERLAARTDSMFAEGLVAEVAGLLRHGLREGVTASRALGYAQVLADLDAGGDGSAAREPTFVGTRRYVRRQRSWFRRDHRVCWLDGGSPDNVDRTLRAWRAVS.

8–15 (GPTGTGKS) is a binding site for ATP. Substrate is bound at residue 10-15 (TGTGKS).

This sequence belongs to the IPP transferase family. As to quaternary structure, monomer. The cofactor is Mg(2+).

The catalysed reaction is adenosine(37) in tRNA + dimethylallyl diphosphate = N(6)-dimethylallyladenosine(37) in tRNA + diphosphate. Catalyzes the transfer of a dimethylallyl group onto the adenine at position 37 in tRNAs that read codons beginning with uridine, leading to the formation of N6-(dimethylallyl)adenosine (i(6)A). This chain is tRNA dimethylallyltransferase, found in Mycobacterium sp. (strain JLS).